The chain runs to 627 residues: Xaa-Pro aminopeptidase 1 (627 aa).

A peptide-binding residues include Arg-88 and His-405. Mn(2+) contacts are provided by Asp-424, Asp-435, and His-498. 3 residues coordinate a peptide: His-498, His-507, and Glu-533. Mn(2+) contacts are provided by Glu-533 and Glu-547.

It belongs to the peptidase M24B family. As to quaternary structure, homodimer. Mn(2+) serves as cofactor.

Its subcellular location is the cytoplasm. The protein resides in the cytosol. The enzyme catalyses Release of any N-terminal amino acid, including proline, that is linked to proline, even from a dipeptide or tripeptide.. In terms of biological role, metalloaminopeptidase that catalyzes the removal of a penultimate prolyl residue from the N-termini of peptides, such as Arg-Pro-Pro. In Dictyostelium discoideum (Social amoeba), this protein is Xaa-Pro aminopeptidase 1 (xpnpep1).